The following is a 600-amino-acid chain: NADPH-dependent diflavin oxidoreductase 1 (600 aa).

In terms of domain architecture, Flavodoxin-like spans 6–150 (LLILYGSQTG…VVDPWLKDLW (145 aa)). Residues 12–17 (SQTGTA), 59–62 (ATTG), 97–106 (LGDSSYPKFN), and Asp132 each bind FMN. Residues 210-449 (IHPFLAPVLS…WVKKGSMKFP (240 aa)) enclose the FAD-binding FR-type domain. FAD-binding positions include Arg354, 386-389 (RAFS), and 420-423 (GLCS). NADP(+) contacts are provided by residues Thr463, 518 to 519 (SR), and 524 to 528 (KIYVQ). Trp599 is a binding site for FAD.

The protein belongs to the NADPH-dependent diflavin oxidoreductase NDOR1 family. This sequence in the N-terminal section; belongs to the flavodoxin family. It in the C-terminal section; belongs to the flavoprotein pyridine nucleotide cytochrome reductase family. As to quaternary structure, interacts with ciapin1; as part of the cytosolic iron-sulfur (Fe-S) protein assembly (CIA) machinery. The cofactor is FAD. FMN is required as a cofactor.

The protein localises to the cytoplasm. It is found in the perinuclear region. It carries out the reaction 2 oxidized [2Fe-2S]-[protein] + NADPH = 2 reduced [2Fe-2S]-[protein] + NADP(+) + H(+). Its function is as follows. NADPH-dependent reductase which is a central component of the cytosolic iron-sulfur (Fe-S) protein assembly (CIA) machinery. Transfers electrons from NADPH via its FAD and FMN prosthetic groups to the [2Fe-2S] cluster of ciapin1, another key component of the CIA machinery. In turn, this reduced cluster provides electrons for assembly of cytosolic iron-sulfur cluster proteins. It can also reduce the [2Fe-2S] cluster of cisd1 and activate this protein implicated in Fe/S cluster repair. This is NADPH-dependent diflavin oxidoreductase 1 from Xenopus laevis (African clawed frog).